The following is a 93-amino-acid chain: FMRFamide-like neuropeptides 22 (93 aa).

The N-terminal stretch at 1-19 (MNRSMIALCVVLMVSLVSA) is a signal peptide. The propeptide occupies 20–46 (QVFDLDGQQLAGLEQNDARLMEQQVKR). Phenylalanine amide is present on residues Phe55, Phe67, and Phe79. Positions 83 to 93 (SGAEAVSEQDY) are excised as a propeptide.

It belongs to the FARP (FMRFamide related peptide) family.

It localises to the secreted. Functionally, FMRFamides and FMRFamide-like peptides are neuropeptides. SPSAKWMRF-amide: Acts as a ligand for the npr-22 receptor in vitro. This is FMRFamide-like neuropeptides 22 from Caenorhabditis elegans.